We begin with the raw amino-acid sequence, 333 residues long: Mycothiol acetyltransferase (333 aa).

N-acetyltransferase domains lie at 18 to 170 and 176 to 333; these read PTLS…LPEP and VTVR…AAAD. E46 lines the 1D-myo-inositol 2-(L-cysteinylamino)-2-deoxy-alpha-D-glucopyranoside pocket. 98-100 serves as a coordination point for acetyl-CoA; the sequence is IVV. 1D-myo-inositol 2-(L-cysteinylamino)-2-deoxy-alpha-D-glucopyranoside is bound by residues E203, K242, and E261. Acetyl-CoA is bound by residues 265–267 and 272–278; these read VGV and GGAGLGR. Y299 serves as a coordination point for 1D-myo-inositol 2-(L-cysteinylamino)-2-deoxy-alpha-D-glucopyranoside. Position 304–309 (304–309) interacts with acetyl-CoA; that stretch reads NERAVR.

The protein belongs to the acetyltransferase family. MshD subfamily. In terms of assembly, monomer.

The catalysed reaction is 1D-myo-inositol 2-(L-cysteinylamino)-2-deoxy-alpha-D-glucopyranoside + acetyl-CoA = mycothiol + CoA + H(+). In terms of biological role, catalyzes the transfer of acetyl from acetyl-CoA to desacetylmycothiol (Cys-GlcN-Ins) to form mycothiol. This Frankia alni (strain DSM 45986 / CECT 9034 / ACN14a) protein is Mycothiol acetyltransferase.